The following is a 3674-amino-acid chain: Dystrophin-1 (3674 aa).

Positions 1–25 (MLFSGASTAKPKKDEKKDKKSDRDP) are disordered. Residues 11 to 25 (PKKDEKKDKKSDRDP) are compositionally biased toward basic and acidic residues. The tract at residues 30–39 (QEWVFVRWAN) is actin-binding. Residues 129–234 (EKLSEAIKQW…YLMSLYLAMI (106 aa)) enclose the Calponin-homology (CH) domain. Residues 265 to 325 (SQPSTSSSSA…KSGKSKKARR (61 aa)) are disordered. Spectrin repeat units lie at residues 327–435 (EQLA…VLQQ), 436–541 (QIHL…KLDG), and 612–656 (CELV…TLVK). The segment covering 655–674 (VKSGKADVKQVQESQNEQKE) has biased composition (basic and acidic residues). 5 disordered regions span residues 655 to 689 (VKSG…TEGE), 968 to 991 (NSQM…EKRR), 1587 to 1606 (ASAE…SSPS), 1796 to 1833 (LSAT…SRSS), and 2387 to 2466 (MNDS…GSTG). The segment covering 675-685 (QPASSEGLSTD) has biased composition (polar residues). Residues 975–991 (TVEKAETRKAEMEEKRR) are compositionally biased toward basic and acidic residues. Positions 1796–1830 (LSATEKKPVETVKSTIPDRPEVPEEPEKSSPDRTS) are enriched in basic and acidic residues. Residues 2391–2411 (GGDTTESRSTVVEMTSVHTKQ) are compositionally biased toward polar residues. Spectrin repeat units lie at residues 2576-2673 (RNEM…VLEA), 2725-2789 (FKTL…RLEK), 2792-2905 (QEWE…RLKK), and 2926-3032 (QRLQ…AVRN). The region spanning 3047–3081 (QSVTLPWQRAISKSNLLPYYIEQTSEKTQWEHPVW) is the WW domain. The ZZ-type zinc finger occupies 3301–3357 (KHASKCNVCKMFPIIGIRYRCLTCFNCDLCQNCFFSQRTAKSHRTNHPMQEYCEKTT). 8 residues coordinate Zn(2+): Cys-3306, Cys-3309, Cys-3321, Cys-3324, Cys-3330, Cys-3333, His-3343, and His-3347. Disordered stretches follow at residues 3481–3522 (STME…TQSQ) and 3568–3645 (KQQA…QMQN). A compositionally biased stretch (polar residues) spans 3568–3579 (KQQAPLSTNSLL).

As to quaternary structure, component of the dystrophin glycoprotein complex (DGC). Interacts with dyb-1 and stn-1 to form the DGC. Interacts with stn-2. As to expression, expressed in body wall, head, pharyngeal and vulval muscles, from late embryogenesis to adulthood (at protein level).

It is found in the cell membrane. Its subcellular location is the sarcolemma. The protein resides in the cytoplasm. The protein localises to the cytoskeleton. In terms of biological role, plays a role in cholinergic transmission and as a functional partner of dystrobrevin (dyb-1), necessary for muscle maintenance. Required for neuronal positioning. May play a role in the localization of slo-1 near dense bodies in the muscle. The polypeptide is Dystrophin-1 (dys-1) (Caenorhabditis elegans).